The sequence spans 37 residues: Large ribosomal subunit protein bL36 (37 aa).

It belongs to the bacterial ribosomal protein bL36 family.

The protein is Large ribosomal subunit protein bL36 of Shewanella baltica (strain OS223).